We begin with the raw amino-acid sequence, 51 residues long: Zinc metalloproteinase-disintegrin-like crovidisin (51 aa).

A Peptidase M12B domain is found at 1 to 12 (AMVTKNNGDLDK). The region spanning 13–18 (SGTECR) is the Disintegrin domain. An N-linked (GlcNAc...) asparagine glycan is attached at Asn29.

It belongs to the venom metalloproteinase (M12B) family. P-III subfamily. P-IIIa sub-subfamily. As to quaternary structure, monomer. Requires Zn(2+) as cofactor. Expressed by the venom gland.

The protein localises to the secreted. Snake venom zinc metalloproteinase-disintegrin-like that blocks the interaction between platelets and collagen fibers through its binding to collagen fibers, resulting in the blockade of collagen-mediated platelet functions such as adhesion, release reaction, thromboxane formation, and aggregation. Binds selectively to collagen type I with high affinity. Also exerts proteolytic activity to matrix. This chain is Zinc metalloproteinase-disintegrin-like crovidisin, found in Crotalus viridis viridis (Prairie rattlesnake).